The chain runs to 94 residues: DNA-directed RNA polymerase subunit omega (94 aa).

This sequence belongs to the RNA polymerase subunit omega family. In terms of assembly, the RNAP catalytic core consists of 2 alpha, 1 beta, 1 beta' and 1 omega subunit. When a sigma factor is associated with the core the holoenzyme is formed, which can initiate transcription.

It catalyses the reaction RNA(n) + a ribonucleoside 5'-triphosphate = RNA(n+1) + diphosphate. Functionally, promotes RNA polymerase assembly. Latches the N- and C-terminal regions of the beta' subunit thereby facilitating its interaction with the beta and alpha subunits. This chain is DNA-directed RNA polymerase subunit omega, found in Bifidobacterium animalis subsp. lactis (strain AD011).